Consider the following 423-residue polypeptide: Site-specific recombinase Flp (423 aa).

Residues 136 to 422 form the Tyr recombinase Flp-type domain; sequence GNSHSKKMLK…DYLSSYINRR (287 aa). The O-(3'-phospho-DNA)-tyrosine intermediate role is filled by Tyr-343.

It belongs to the 'phage' integrase family. In terms of assembly, homotetramer.

Functionally, part of the plasmid amplification system, which corrects any decrease in copy number caused by a rare missegregation event. Catalyzes the recombination between the large inverted repetitions of the 2-micron plasmid during plasmid replication. This recombination event changes the direction of one of the two replication forks in the bidirectionally replicating molecule, effectively resulting in multiple rounds of replication from a single initiation event. Binds specifically to the FLP recognition target (FRT) site where it induces DNA to bend. Three types of bend exist. Type I is approximately 60 degrees and results from 1 FLP molecule binding to 1 symmetry element. Type II is &gt;144 degrees and results from FLP molecules binding to symmetry elements a and b. Type III is approximately 65 degrees and results from FLP molecules binding to symmetry elements b and c. The polypeptide is Site-specific recombinase Flp (FLP1) (Saccharomyces cerevisiae (strain ATCC 204508 / S288c) (Baker's yeast)).